The chain runs to 213 residues: Octanoyltransferase (213 aa).

Residues 28-203 (GTSPETLLLL…RFPFLLDERL (176 aa)) enclose the BPL/LPL catalytic domain. Substrate-binding positions include 66-73 (RGGDVTFH), 133-135 (SIG), and 146-148 (GFA). Residue C164 is the Acyl-thioester intermediate of the active site.

It belongs to the LipB family.

The protein localises to the cytoplasm. It catalyses the reaction octanoyl-[ACP] + L-lysyl-[protein] = N(6)-octanoyl-L-lysyl-[protein] + holo-[ACP] + H(+). Its pathway is protein modification; protein lipoylation via endogenous pathway; protein N(6)-(lipoyl)lysine from octanoyl-[acyl-carrier-protein]: step 1/2. Catalyzes the transfer of endogenously produced octanoic acid from octanoyl-acyl-carrier-protein onto the lipoyl domains of lipoate-dependent enzymes. Lipoyl-ACP can also act as a substrate although octanoyl-ACP is likely to be the physiological substrate. This is Octanoyltransferase from Geobacter metallireducens (strain ATCC 53774 / DSM 7210 / GS-15).